Consider the following 434-residue polypeptide: MDSFFINGYVPRDTFIHRLHPTTKLLIFLLFVILVFVPIGFVFQSVIFVFATVIFFVAKLPGRFYLSSIKSISLLFLLLLFVNWFTFRDPGFYITADQVNTVKPHFNGNNFNFWNISLFNYQDNVFSQVFNFNRANMTELNKINFFFKETANANAYTKVTGIDKLAEMLASKNLFKFNGSTNGIDKNKILGAFLDHKIAVYLGRSWGGDFSGFVIDVSVSDKTSTFTIKPFLANSNYVLTLRAIILAFYVTQKILIMIILATVLTSTSSSVELAYGIERLLWPLKLLRVPVNVFAMTIAIAIRFVPSLLLESQRILNAQASRGLDFKNGNFFVKMRSLSSLVVPMISIAFRNAGELASAMEARGYDPTKKRTTYRKFKIDWVDATALILTALYFVVIIFLTVKGAVFLDLGTPEWLLTGKIKEQVERSLSVKSA.

5 helical membrane-spanning segments follow: residues 27-47, 64-84, 244-264, 289-309, and 387-407; these read IFLLFVILVFVPIGFVFQSVI, FYLSSIKSISLLFLLLLFVNW, IILAFYVTQKILIMIILATVL, VPVNVFAMTIAIAIRFVPSLL, and LILTALYFVVIIFLTVKGAVF.

It belongs to the CbiQ family.

It is found in the cell membrane. This is an uncharacterized protein from Mycoplasma pneumoniae (strain ATCC 29342 / M129 / Subtype 1) (Mycoplasmoides pneumoniae).